Here is a 229-residue protein sequence, read N- to C-terminus: Purine nucleoside phosphorylase BB_0467 (229 aa).

Zn(2+) contacts are provided by histidine 55, cysteine 91, and histidine 108.

This sequence belongs to the purine nucleoside phosphorylase YfiH/LACC1 family. In terms of assembly, homodimer. The cofactor is Cu(2+). Zn(2+) serves as cofactor.

The enzyme catalyses adenosine + phosphate = alpha-D-ribose 1-phosphate + adenine. The catalysed reaction is S-methyl-5'-thioadenosine + phosphate = 5-(methylsulfanyl)-alpha-D-ribose 1-phosphate + adenine. It carries out the reaction inosine + phosphate = alpha-D-ribose 1-phosphate + hypoxanthine. It catalyses the reaction adenosine + H2O + H(+) = inosine + NH4(+). In terms of biological role, purine nucleoside enzyme that catalyzes the phosphorolysis of adenosine and inosine nucleosides, yielding D-ribose 1-phosphate and the respective free bases, adenine and hypoxanthine. Also catalyzes the phosphorolysis of S-methyl-5'-thioadenosine into adenine and S-methyl-5-thio-alpha-D-ribose 1-phosphate. Also has adenosine deaminase activity. This Borreliella burgdorferi (strain ATCC 35210 / DSM 4680 / CIP 102532 / B31) (Borrelia burgdorferi) protein is Purine nucleoside phosphorylase BB_0467.